Here is a 97-residue protein sequence, read N- to C-terminus: Co-chaperonin GroES (97 aa).

Belongs to the GroES chaperonin family. As to quaternary structure, heptamer of 7 subunits arranged in a ring. Interacts with the chaperonin GroEL.

Its subcellular location is the cytoplasm. Together with the chaperonin GroEL, plays an essential role in assisting protein folding. The GroEL-GroES system forms a nano-cage that allows encapsulation of the non-native substrate proteins and provides a physical environment optimized to promote and accelerate protein folding. GroES binds to the apical surface of the GroEL ring, thereby capping the opening of the GroEL channel. This chain is Co-chaperonin GroES, found in Tolumonas auensis (strain DSM 9187 / NBRC 110442 / TA 4).